The sequence spans 351 residues: MTIAVGRAPSRGWFDVLDDWLKRDRFVFVGWSGILLFPCAFLALGGWLTGTTFVTSWYTHGLASSYLEGANFLTVAVSSPADSMGHSLLLLWGPEAQGDFTRWCQLGGLWPFVALHGAFGLIGFMLRQFEIARLVGIRPYNALAFSAPIAVFVSVFLMYPLGQSSWFFAPSFGVAAIFRFLLFLQGFHNWTLNPFHMMGVAGVLGGALLCAIHGATVENTLFEDGEGANTFRAFNPTQSEETYSMVTANRFWSQIFGIAFSNKRWLHFFMLFVPVTGLWMSAVGIVGLALNLRAYDFVSQELRAAEDPEFETFYTKNILLNEGIRAWMAPQDQPHEKFVFPEEVLPRGNAL.

The helical transmembrane segment at 39–59 (CAFLALGGWLTGTTFVTSWYT) threads the bilayer. H116 contributes to the chlorophyll a binding site. Residues 123–139 (GFMLRQFEIARLVGIRP) traverse the membrane as a helical segment. Positions 128 and 141 each coordinate pheophytin a. The helical transmembrane segment at 151–164 (VFVSVFLMYPLGQS) threads the bilayer. H196 is a binding site for chlorophyll a. Residues 206-226 (GALLCAIHGATVENTLFEDGE) traverse the membrane as a helical segment. Positions 213 and 260 each coordinate a plastoquinone. Residue H213 coordinates Fe cation. Residue H267 coordinates Fe cation. The chain crosses the membrane as a helical span at residues 277–293 (GLWMSAVGIVGLALNLR).

This sequence belongs to the reaction center PufL/M/PsbA/D family. In terms of assembly, PSII is composed of 1 copy each of membrane proteins PsbA, PsbB, PsbC, PsbD, PsbE, PsbF, PsbH, PsbI, PsbJ, PsbK, PsbL, PsbM, PsbT, PsbX, PsbY, PsbZ, Psb30/Ycf12, peripheral proteins PsbO, CyanoQ (PsbQ), PsbU, PsbV and a large number of cofactors. It forms dimeric complexes. The D1/D2 heterodimer binds P680, chlorophylls that are the primary electron donor of PSII, and subsequent electron acceptors. It shares a non-heme iron and each subunit binds pheophytin, quinone, additional chlorophylls, carotenoids and lipids. There is also a Cl(-1) ion associated with D1 and D2, which is required for oxygen evolution. The PSII complex binds additional chlorophylls, carotenoids and specific lipids. is required as a cofactor.

It is found in the cellular thylakoid membrane. The enzyme catalyses 2 a plastoquinone + 4 hnu + 2 H2O = 2 a plastoquinol + O2. Photosystem II (PSII) is a light-driven water:plastoquinone oxidoreductase that uses light energy to abstract electrons from H(2)O, generating O(2) and a proton gradient subsequently used for ATP formation. It consists of a core antenna complex that captures photons, and an electron transfer chain that converts photonic excitation into a charge separation. The D1/D2 (PsbA/PsbD) reaction center heterodimer binds P680, the primary electron donor of PSII as well as several subsequent electron acceptors. D2 is needed for assembly of a stable PSII complex. In Trichormus variabilis (strain ATCC 29413 / PCC 7937) (Anabaena variabilis), this protein is Photosystem II D2 protein.